The sequence spans 258 residues: MTQHSRDTPQFYLTAPSPCPYLPGRQERKVFTHLVGDKATDLNDLLTHGGFRRSQSIAYRPACDQCRACVSVRVIANEFRPSRNFRKVLARNSDLVGEQRSAVPTSEQYSIFRSYLDQRHRHGGMADMTVLDYAMMVEDSHVETRIIEYRRRNLSNGPNARGGELIAVALTDVLSDGLSMVYSFFDPSETTRSLGTFMILDHIARARRQGLPYVYLGYWIEGSKKMDYKSRYLPQQRLAAAGWLRVDDEGHTAPEPQE.

Belongs to the R-transferase family. Bpt subfamily.

The protein localises to the cytoplasm. The catalysed reaction is N-terminal L-glutamyl-[protein] + L-leucyl-tRNA(Leu) = N-terminal L-leucyl-L-glutamyl-[protein] + tRNA(Leu) + H(+). It catalyses the reaction N-terminal L-aspartyl-[protein] + L-leucyl-tRNA(Leu) = N-terminal L-leucyl-L-aspartyl-[protein] + tRNA(Leu) + H(+). Its function is as follows. Functions in the N-end rule pathway of protein degradation where it conjugates Leu from its aminoacyl-tRNA to the N-termini of proteins containing an N-terminal aspartate or glutamate. The chain is Aspartate/glutamate leucyltransferase from Bradyrhizobium sp. (strain BTAi1 / ATCC BAA-1182).